A 321-amino-acid polypeptide reads, in one-letter code: Glycerol-3-phosphate dehydrogenase [NAD(P)+] (321 aa).

Positions 10, 11, 31, 32, and 104 each coordinate NADPH. Positions 104 and 132 each coordinate sn-glycerol 3-phosphate. Alanine 136 lines the NADPH pocket. Lysine 186, aspartate 238, serine 248, arginine 249, and asparagine 250 together coordinate sn-glycerol 3-phosphate. Residue lysine 186 is the Proton acceptor of the active site. Arginine 249 serves as a coordination point for NADPH. NADPH is bound at residue glutamate 272.

This sequence belongs to the NAD-dependent glycerol-3-phosphate dehydrogenase family.

Its subcellular location is the cytoplasm. The enzyme catalyses sn-glycerol 3-phosphate + NAD(+) = dihydroxyacetone phosphate + NADH + H(+). It catalyses the reaction sn-glycerol 3-phosphate + NADP(+) = dihydroxyacetone phosphate + NADPH + H(+). Its function is as follows. Catalyzes the reduction of the glycolytic intermediate dihydroxyacetone phosphate (DHAP) to sn-glycerol 3-phosphate (G3P). This Methanothermobacter thermautotrophicus (strain ATCC 29096 / DSM 1053 / JCM 10044 / NBRC 100330 / Delta H) (Methanobacterium thermoautotrophicum) protein is Glycerol-3-phosphate dehydrogenase [NAD(P)+].